A 202-amino-acid chain; its full sequence is Nascent polypeptide-associated complex subunit alpha (202 aa).

A compositionally biased stretch (basic and acidic residues) spans 1–19 (MADPRVEEIVEEETPKQTV). A disordered region spans residues 1-41 (MADPRVEEIVEEETPKQTVEDAGSDSESEAGEANIPAGAAV). The NAC-A/B domain maps to 45–110 (SRNEKKARKA…AKIEDLNSQA (66 aa)). The span at 117 to 127 (QLAAAEAAAGE) shows a compositional bias: low complexity. Residues 117–165 (QLAAAEAAAGEHAGHDHEHDLGTKVPEAETKKEEEEDDGEPVDESGLEA) are disordered. Positions 128-149 (HAGHDHEHDLGTKVPEAETKKE) are enriched in basic and acidic residues. The segment covering 150-162 (EEEDDGEPVDESG) has biased composition (acidic residues). Residues 163-202 (LEAKDIELVMAQANVSRKKAVKALRENDNDIVNSIMALSI) form the UBA domain.

It belongs to the NAC-alpha family. As to quaternary structure, part of the nascent polypeptide-associated complex (NAC), consisting of egd2 and egd1. NAC associates with ribosomes via egd1.

Its subcellular location is the cytoplasm. It is found in the nucleus. In terms of biological role, component of the nascent polypeptide-associated complex (NAC), a dynamic component of the ribosomal exit tunnel, protecting the emerging polypeptides from interaction with other cytoplasmic proteins to ensure appropriate nascent protein targeting. The NAC complex also promotes mitochondrial protein import by enhancing productive ribosome interactions with the outer mitochondrial membrane and blocks the inappropriate interaction of ribosomes translating non-secretory nascent polypeptides with translocation sites in the membrane of the endoplasmic reticulum. Egd2 may also be involved in transcription regulation. This Aspergillus oryzae (strain ATCC 42149 / RIB 40) (Yellow koji mold) protein is Nascent polypeptide-associated complex subunit alpha (egd2).